The primary structure comprises 444 residues: Tubulin beta-9 chain (444 aa).

Residues glutamine 11, glutamate 69, serine 138, glycine 142, threonine 143, glycine 144, asparagine 204, and asparagine 226 each contribute to the GTP site. Position 69 (glutamate 69) interacts with Mg(2+).

The protein belongs to the tubulin family. In terms of assembly, dimer of alpha and beta chains. A typical microtubule is a hollow water-filled tube with an outer diameter of 25 nm and an inner diameter of 15 nM. Alpha-beta heterodimers associate head-to-tail to form protofilaments running lengthwise along the microtubule wall with the beta-tubulin subunit facing the microtubule plus end conferring a structural polarity. Microtubules usually have 13 protofilaments but different protofilament numbers can be found in some organisms and specialized cells. Interacts with TFCA. Requires Mg(2+) as cofactor.

The protein localises to the cytoplasm. It is found in the cytoskeleton. Functionally, tubulin is the major constituent of microtubules, a cylinder consisting of laterally associated linear protofilaments composed of alpha- and beta-tubulin heterodimers. Microtubules grow by the addition of GTP-tubulin dimers to the microtubule end, where a stabilizing cap forms. Below the cap, tubulin dimers are in GDP-bound state, owing to GTPase activity of alpha-tubulin. The chain is Tubulin beta-9 chain (TUBB9) from Arabidopsis thaliana (Mouse-ear cress).